The chain runs to 332 residues: DNA packaging protein (332 aa).

Residues 1–207 (MDKSLFYNPQ…SERRKTRFGR (207 aa)) are ATPase. 24–31 (GARGIGKS) serves as a coordination point for ATP. The segment at 233-332 (KRSKDSKFVF…YELFRKMRIQ (100 aa)) is DNA-binding.

It belongs to the phi29likevirus gp16 family. Homopentamer. Interacts with the packaging RNA (pRNA). Part of a DNA-gp3-gp16 complex.

The catalysed reaction is ATP + H2O = ADP + phosphate + H(+). In terms of biological role, ATPase required for the genome encapsidation reaction. Part of the active packaging motor via the binding to the packaging RNA (pRNA), itself fixed to the head-tail connector at the unique portal vertex of the prohead. Binds and supercoils the pre-formed, unit-length DNA bound to gp3 to produce an initiation complex for DNA packaging. Provides the energy to actively pump the viral DNA into the prohead. Approximately one molecule of ATP is used in the packaging of 2 bp of viral DNA. ATP hydrolysis results in a conformational change that causes the arginine/lysine finger of one subunit to move into the active site of its neighbor, where it interacts with the negatively charged oxygens on the gamma-phosphate of ATP. After packaging, the ATPase and the pRNA are released from the prohead. The polypeptide is DNA packaging protein (16) (Bacillus phage phi29 (Bacteriophage phi-29)).